The chain runs to 267 residues: 4-hydroxy-tetrahydrodipicolinate reductase (267 aa).

10–15 is a binding site for NAD(+); the sequence is GAGGKM. Residue Arg-38 participates in NADP(+) binding. Residues 100–102 and 126–129 each bind NAD(+); these read GTT and APNF. The Proton donor/acceptor role is filled by His-156. His-157 contacts (S)-2,3,4,5-tetrahydrodipicolinate. Catalysis depends on Lys-160, which acts as the Proton donor. 166–167 contacts (S)-2,3,4,5-tetrahydrodipicolinate; sequence GT.

Belongs to the DapB family.

It is found in the cytoplasm. The catalysed reaction is (S)-2,3,4,5-tetrahydrodipicolinate + NAD(+) + H2O = (2S,4S)-4-hydroxy-2,3,4,5-tetrahydrodipicolinate + NADH + H(+). It carries out the reaction (S)-2,3,4,5-tetrahydrodipicolinate + NADP(+) + H2O = (2S,4S)-4-hydroxy-2,3,4,5-tetrahydrodipicolinate + NADPH + H(+). It participates in amino-acid biosynthesis; L-lysine biosynthesis via DAP pathway; (S)-tetrahydrodipicolinate from L-aspartate: step 4/4. Catalyzes the conversion of 4-hydroxy-tetrahydrodipicolinate (HTPA) to tetrahydrodipicolinate. This is 4-hydroxy-tetrahydrodipicolinate reductase from Desulfitobacterium hafniense (strain DSM 10664 / DCB-2).